The sequence spans 62 residues: Temporin-CDYb (62 aa).

A signal peptide spans 1 to 22; sequence MFTLKKSLLLLFFLGTINLSLC. Positions 23–45 are excised as a propeptide; the sequence is EEERDADEEERRDDPEERAVQVE. The residue at position 60 (Leu60) is a Leucine amide.

It belongs to the frog skin active peptide (FSAP) family. Temporin subfamily. As to expression, expressed by the skin glands.

The protein localises to the secreted. Antimicrobial peptide. Has low activity against the Gram-positive bacterium S.aureus (MIC&gt;100 uM) and the Gram-negative bacterium E.coli (MIC&gt;100 uM). Has weak hemolytic activity against human erythrocytes. The sequence is that of Temporin-CDYb from Rana dybowskii (Dybovsky's frog).